Here is a 568-residue protein sequence, read N- to C-terminus: PTS system lactose-specific EIICB component (568 aa).

The PTS EIIC type-3 domain maps to 8 to 409; it reads IEKGKPFFEK…LVDTVIYYPF (402 aa). 10 helical membrane passes run 30–50, 65–85, 103–123, 128–148, 183–203, 222–242, 246–266, 283–303, 339–359, and 381–401; these read GFIS…IAYV, MLMT…AGTT, INFI…AADP, GFLS…AAFI, FAFS…VIGV, GYLG…VGIH, IVEP…AHLI, FIVT…FMWL, VFFI…KFFV, and IVLG…LILV. One can recognise a PTS EIIB type-3 domain in the interval 465–568; sequence ETNVLVLCAG…LAFVEEQFKD (104 aa). The active-site Phosphocysteine intermediate; for EIIB activity is Cys-472. Cys-472 bears the Phosphocysteine; by EIIA mark.

The protein localises to the cell membrane. The enzyme catalyses lactose(out) + N(pros)-phospho-L-histidyl-[protein] = lactose 6-phosphate(in) + L-histidyl-[protein]. The phosphoenolpyruvate-dependent sugar phosphotransferase system (sugar PTS), a major carbohydrate active transport system, catalyzes the phosphorylation of incoming sugar substrates concomitantly with their translocation across the cell membrane. The enzyme II LacEF PTS system is involved in lactose transport. The protein is PTS system lactose-specific EIICB component of Streptococcus mutans serotype c (strain ATCC 700610 / UA159).